A 1429-amino-acid polypeptide reads, in one-letter code: Alpha-agarase (1429 aa).

Positions 1–26 (MFKTKRSLLNSSIAISFAVLGVQAQA) are cleaved as a signal peptide. CBM6 domains follow at residues 29–161 (LELQ…FRLT) and 211–345 (FVIQ…LTFT). Disordered stretches follow at residues 349-400 (SDGG…DGVS) and 474-495 (NTPAGTQVDASGCETDNGGEPG). Polar residues predominate over residues 369–378 (SSDSCPNTPT). The PA14 domain occupies 490–638 (NGGEPGDSYY…GGTNFVHPSN (149 aa)). The CBM6 3 domain occupies 662–793 (IYIQLEDFDE…QWSGDLVRLA (132 aa)).

This sequence belongs to the glycosyl hydrolase 96 family. As to quaternary structure, homodimer. Ca(2+) serves as cofactor.

The enzyme catalyses Endohydrolysis of 1,3-alpha-L-galactosidic linkages in agarose, yielding agarotetraose as the major product.. Alpha-agarase. Does not hydrolyze agarotetraose, agarohexaose, kappa-carrageenan, iota-carrageenan or lambda-carrageenan. In Alteromonas agarilytica, this protein is Alpha-agarase.